We begin with the raw amino-acid sequence, 96 residues long: MKITPEQAREALDAWICRPGMTQEQATILITEAFWALKERPNIDVQRVTYEGGAIDQRALGVNRVKIFERWKAIDTRDKREKFTALVPAIMEATTG.

The polypeptide is Protein YdfX (ydfX) (Escherichia coli (strain K12)).